Here is a 34-residue protein sequence, read N- to C-terminus: Photosystem II reaction center protein M (34 aa).

A helical membrane pass occupies residues 5-25 (ILGLMAVALFILIPTSFLLIL).

Belongs to the PsbM family. As to quaternary structure, PSII is composed of 1 copy each of membrane proteins PsbA, PsbB, PsbC, PsbD, PsbE, PsbF, PsbH, PsbI, PsbJ, PsbK, PsbL, PsbM, PsbT, PsbX, PsbY, PsbZ, Psb30/Ycf12, at least 3 peripheral proteins of the oxygen-evolving complex and a large number of cofactors. It forms dimeric complexes.

It localises to the plastid. The protein resides in the chloroplast thylakoid membrane. Its function is as follows. One of the components of the core complex of photosystem II (PSII). PSII is a light-driven water:plastoquinone oxidoreductase that uses light energy to abstract electrons from H(2)O, generating O(2) and a proton gradient subsequently used for ATP formation. It consists of a core antenna complex that captures photons, and an electron transfer chain that converts photonic excitation into a charge separation. This subunit is found at the monomer-monomer interface. In Tupiella akineta (Green alga), this protein is Photosystem II reaction center protein M.